A 140-amino-acid polypeptide reads, in one-letter code: Ribosomal RNA large subunit methyltransferase H (140 aa).

Residues L55 and G87 each coordinate S-adenosyl-L-methionine.

The protein belongs to the RNA methyltransferase RlmH family. In terms of assembly, homodimer.

It localises to the cytoplasm. It catalyses the reaction pseudouridine(1915) in 23S rRNA + S-adenosyl-L-methionine = N(3)-methylpseudouridine(1915) in 23S rRNA + S-adenosyl-L-homocysteine + H(+). Functionally, specifically methylates the pseudouridine at position 1915 (m3Psi1915) in 23S rRNA. The chain is Ribosomal RNA large subunit methyltransferase H from Erythrobacter litoralis (strain HTCC2594).